We begin with the raw amino-acid sequence, 262 residues long: Transmembrane and immunoglobulin domain-containing protein 1 (262 aa).

Positions 1-29 (MAWKSSVIMQMGRFLLLVILFLPREMTSS) are cleaved as a signal peptide. The 85-residue stretch at 30–114 (VLTVNGKTEN…LGRDQSVSVS (85 aa)) folds into the Ig-like C2-type 1 domain. Topologically, residues 30–220 (VLTVNGKTEN…IVKDKTVGVP (191 aa)) are extracellular. Cysteine 54 and cysteine 103 form a disulfide bridge. Residues asparagine 58, asparagine 83, asparagine 118, asparagine 158, and asparagine 190 are each glycosylated (N-linked (GlcNAc...) asparagine). The Ig-like C2-type 2 domain maps to 122–207 (PPLLSGNDFQ…KSSLKTESLD (86 aa)). A disulfide bridge connects residues cysteine 143 and cysteine 195. The helical transmembrane segment at 221–241 (IEPIIAACVVIFLTLCFGLIA) threads the bilayer. Residues 242–262 (RRKKIMKLCMKDKDPHSETAL) lie on the Cytoplasmic side of the membrane.

In terms of assembly, homodimer. In terms of processing, N-glycosylated.

It localises to the cell membrane. Its subcellular location is the cytoplasm. May control cell-cell adhesion, cell migration and proliferation, cell morphology, and protects renal epithelial cells from oxidative cell injury to promote cell survival. This is Transmembrane and immunoglobulin domain-containing protein 1 from Homo sapiens (Human).